A 291-amino-acid polypeptide reads, in one-letter code: 33 kDa chaperonin (291 aa).

Disulfide bonds link Cys237–Cys239 and Cys270–Cys273.

Belongs to the HSP33 family. Under oxidizing conditions two disulfide bonds are formed involving the reactive cysteines. Under reducing conditions zinc is bound to the reactive cysteines and the protein is inactive.

It is found in the cytoplasm. Redox regulated molecular chaperone. Protects both thermally unfolding and oxidatively damaged proteins from irreversible aggregation. Plays an important role in the bacterial defense system toward oxidative stress. The chain is 33 kDa chaperonin from Halalkalibacterium halodurans (strain ATCC BAA-125 / DSM 18197 / FERM 7344 / JCM 9153 / C-125) (Bacillus halodurans).